The chain runs to 471 residues: Chitobiosyldiphosphodolichol beta-mannosyltransferase (471 aa).

Residues 1-31 (MDTSSVTMHTERACCHQAQRAVAAMLDKAPS) are Lumenal-facing. Residues 32-52 (WLIWTAVLYVGLPFMLYWAVP) traverse the membrane as a helical segment. The Cytoplasmic portion of the chain corresponds to 53 to 126 (YLFYHNKTKS…ALPGASNAGK (74 aa)). The helical intramembrane region spans 127-147 (SLGQTARKVVLQTCHIVRQLW). At 148–471 (ELRGCDYILI…MSELQVVRQS (324 aa)) the chain is on the cytoplasmic side.

Belongs to the glycosyltransferase group 1 family.

The protein localises to the endoplasmic reticulum membrane. It catalyses the reaction an N,N'-diacetylchitobiosyl-diphospho-di-trans,poly-cis-dolichol + GDP-alpha-D-mannose = a beta-D-Man-(1-&gt;4)-beta-D-GlcNAc-(1-&gt;4)-alpha-D-GlcNAc-diphospho-di-trans,poly-cis-dolichol + GDP + H(+). It participates in protein modification; protein glycosylation. Functionally, participates in the formation of the lipid-linked precursor oligosaccharide for N-glycosylation. Involved in assembling the dolichol-pyrophosphate-GlcNAc(2)-Man(5) intermediate on the cytoplasmic surface of the ER. The chain is Chitobiosyldiphosphodolichol beta-mannosyltransferase (ALG1) from Eremothecium gossypii (strain ATCC 10895 / CBS 109.51 / FGSC 9923 / NRRL Y-1056) (Yeast).